We begin with the raw amino-acid sequence, 441 residues long: Chitinase-like protein Idgf3 (441 aa).

Positions 1–23 (MSGSLWLSLALSLAVLAQFKVSA) are cleaved as a signal peptide. One can recognise a GH18 domain in the interval 25 to 441 (PNLVCFYDSQ…MLRAIKYRLL (417 aa)). An intrachain disulfide couples Cys-29 to Cys-56. Asn-221 carries N-linked (GlcNAc...) asparagine glycosylation. Residues 310-331 (GDSGMPVVSSTQGPAPAGPQSK) form a disordered region. A disulfide bond links Cys-342 and Cys-425.

This sequence belongs to the glycosyl hydrolase 18 family. IDGF subfamily. Post-translationally, glycosylated.

It is found in the secreted. Functionally, cooperates with insulin-like peptides to stimulate the proliferation, polarization and motility of imaginal disk cells. May act by stabilizing the binding of insulin-like peptides to its receptor through a simultaneous interaction with both molecules to form a multiprotein signaling complex. In Drosophila simulans (Fruit fly), this protein is Chitinase-like protein Idgf3 (Idgf3).